The chain runs to 355 residues: Peptide chain release factor 1 (355 aa).

The residue at position 233 (Q233) is an N5-methylglutamine. Residues 282 to 293 (RKKEQARADSRR) are compositionally biased toward basic and acidic residues. Positions 282 to 305 (RKKEQARADSRRGQVGSGDRSERI) are disordered.

This sequence belongs to the prokaryotic/mitochondrial release factor family. In terms of processing, methylated by PrmC. Methylation increases the termination efficiency of RF1.

It localises to the cytoplasm. In terms of biological role, peptide chain release factor 1 directs the termination of translation in response to the peptide chain termination codons UAG and UAA. In Rickettsia rickettsii (strain Iowa), this protein is Peptide chain release factor 1.